Here is a 389-residue protein sequence, read N- to C-terminus: E3 ubiquitin-protein ligase E3D (389 aa).

Ala-2 is subject to N-acetylalanine. The BRAT1-like motif motif lies at 129–159 (PLPSENWGALVGEWCCHPDPFANKPLHPQEN). A Zn(2+)-binding site is contributed by Cys-144. The tract at residues 235–257 (QSSERSFPIIPRPRFVQSVIAQC) is interaction with UBE2C. Residues 353–389 (LPSATCLELLLILSKSNANLPSSLRHMNSFQVAFLKI) form an HECT-like region.

Interacts with UBE2C/UbcH10 (E2 ubiquitin-conjugating enzyme). In vitro, interacts with cyclin-B. Ubiquitinated by UBCH10 (E2 ubiquitin-conjugating enzyme).

The protein localises to the cytoplasm. It carries out the reaction S-ubiquitinyl-[E2 ubiquitin-conjugating enzyme]-L-cysteine + [acceptor protein]-L-lysine = [E2 ubiquitin-conjugating enzyme]-L-cysteine + N(6)-ubiquitinyl-[acceptor protein]-L-lysine.. It functions in the pathway protein modification; protein ubiquitination. Its function is as follows. E3 ubiquitin-protein ligase which accepts ubiquitin from specific E2 ubiquitin-conjugating enzymes, and transfers it to substrates, generally promoting their degradation by the proteasome. Independently of its E3 ubiquitin-protein ligase activity, acts as an inhibitor of CPSF3 endonuclease activity by blocking CPSF3 active site. The sequence is that of E3 ubiquitin-protein ligase E3D (UBE3D) from Pongo abelii (Sumatran orangutan).